Consider the following 209-residue polypeptide: MIGLIGRKVGMTRVFTEEGVSIPVTVVEVEANRVAQVKTLETDGYAAIQVTAGTKKANRVNKAEAGHFAKAGVEAGRGLWEFRLENGEEFAVGSELTVELFNEVKKVDVTGTSKGKGFQGTVKRWNFRTQDMTHGNSLSHRAPGSIGQCQTPGRVFKGKKMAGHMGAERVTTQNLEIVRVDAERNLLLIKGAVPGATGGNVIVKPAVKA.

Gln150 is modified (N5-methylglutamine).

Belongs to the universal ribosomal protein uL3 family. In terms of assembly, part of the 50S ribosomal subunit. Forms a cluster with proteins L14 and L19. Methylated by PrmB.

One of the primary rRNA binding proteins, it binds directly near the 3'-end of the 23S rRNA, where it nucleates assembly of the 50S subunit. The chain is Large ribosomal subunit protein uL3 from Vibrio vulnificus (strain CMCP6).